The sequence spans 71 residues: MSQYSQNQSSGAYPTPPVSTGPYVAPPPLGYPTNDTSHATVATVETKSKGDGFLKGCLAAMCCCCVLDACF.

Positions 1 to 12 (MSQYSQNQSSGA) are enriched in polar residues. The disordered stretch occupies residues 1 to 36 (MSQYSQNQSSGAYPTPPVSTGPYVAPPPLGYPTNDT). Residues 14–30 (PTPPVSTGPYVAPPPLG) are compositionally biased toward pro residues. Residues 48–64 (SKGDGFLKGCLAAMCCC) traverse the membrane as a helical segment.

Belongs to the CYSTM1 family. Homodimer and heterodimers. Interacts with CYSTM7 and WIH1/CYSTM13. Mostly expressed in roots, stems, rosette leaves and siliques and, to a lower extent, in flowers and cauline leaves.

Its subcellular location is the cell membrane. The protein resides in the cytoplasm. Involved in resistance to abiotic stress. This chain is Protein CYSTEINE-RICH TRANSMEMBRANE MODULE 6, found in Arabidopsis thaliana (Mouse-ear cress).